A 95-amino-acid chain; its full sequence is Aspartyl/glutamyl-tRNA(Asn/Gln) amidotransferase subunit C (95 aa).

Belongs to the GatC family. As to quaternary structure, heterotrimer of A, B and C subunits.

It carries out the reaction L-glutamyl-tRNA(Gln) + L-glutamine + ATP + H2O = L-glutaminyl-tRNA(Gln) + L-glutamate + ADP + phosphate + H(+). The catalysed reaction is L-aspartyl-tRNA(Asn) + L-glutamine + ATP + H2O = L-asparaginyl-tRNA(Asn) + L-glutamate + ADP + phosphate + 2 H(+). Its function is as follows. Allows the formation of correctly charged Asn-tRNA(Asn) or Gln-tRNA(Gln) through the transamidation of misacylated Asp-tRNA(Asn) or Glu-tRNA(Gln) in organisms which lack either or both of asparaginyl-tRNA or glutaminyl-tRNA synthetases. The reaction takes place in the presence of glutamine and ATP through an activated phospho-Asp-tRNA(Asn) or phospho-Glu-tRNA(Gln). This Campylobacter lari (strain RM2100 / D67 / ATCC BAA-1060) protein is Aspartyl/glutamyl-tRNA(Asn/Gln) amidotransferase subunit C.